Consider the following 700-residue polypeptide: Transketolase (700 aa).

His-45 lines the substrate pocket. Thiamine diphosphate-binding positions include Thr-48, His-85, and 133–135; that span reads GPL. Residue Asp-177 coordinates Mg(2+). 2 residues coordinate thiamine diphosphate: Gly-178 and Asn-207. Positions 207 and 209 each coordinate Mg(2+). 3 residues coordinate substrate: His-283, Arg-378, and Ser-405. His-283 contacts thiamine diphosphate. The Proton donor role is filled by Glu-441. Phe-467 contributes to the thiamine diphosphate binding site. Substrate-binding residues include His-491, Asp-499, and Arg-552.

This sequence belongs to the transketolase family. Homodimer. Mg(2+) is required as a cofactor. It depends on Ca(2+) as a cofactor. Mn(2+) serves as cofactor. The cofactor is Co(2+). Requires thiamine diphosphate as cofactor.

It carries out the reaction D-sedoheptulose 7-phosphate + D-glyceraldehyde 3-phosphate = aldehydo-D-ribose 5-phosphate + D-xylulose 5-phosphate. Its function is as follows. Catalyzes the transfer of a two-carbon ketol group from a ketose donor to an aldose acceptor, via a covalent intermediate with the cofactor thiamine pyrophosphate. The sequence is that of Transketolase (tkt) from Mycobacterium bovis (strain ATCC BAA-935 / AF2122/97).